We begin with the raw amino-acid sequence, 283 residues long: Formamidopyrimidine-DNA glycosylase (283 aa).

The Schiff-base intermediate with DNA role is filled by Pro2. Glu3 (proton donor) is an active-site residue. Lys58 (proton donor; for beta-elimination activity) is an active-site residue. Positions 100, 119, and 162 each coordinate DNA. The FPG-type zinc finger occupies 247–283 (RVYGREGLPCVTPGCSGTVGRIVQSGRSSFHCPLCQR). The Proton donor; for delta-elimination activity role is filled by Arg273.

Belongs to the FPG family. As to quaternary structure, monomer. Zn(2+) serves as cofactor.

It catalyses the reaction Hydrolysis of DNA containing ring-opened 7-methylguanine residues, releasing 2,6-diamino-4-hydroxy-5-(N-methyl)formamidopyrimidine.. The enzyme catalyses 2'-deoxyribonucleotide-(2'-deoxyribose 5'-phosphate)-2'-deoxyribonucleotide-DNA = a 3'-end 2'-deoxyribonucleotide-(2,3-dehydro-2,3-deoxyribose 5'-phosphate)-DNA + a 5'-end 5'-phospho-2'-deoxyribonucleoside-DNA + H(+). Involved in base excision repair of DNA damaged by oxidation or by mutagenic agents. Acts as a DNA glycosylase that recognizes and removes damaged bases. Has a preference for oxidized purines, such as 7,8-dihydro-8-oxoguanine (8-oxoG). Has AP (apurinic/apyrimidinic) lyase activity and introduces nicks in the DNA strand. Cleaves the DNA backbone by beta-delta elimination to generate a single-strand break at the site of the removed base with both 3'- and 5'-phosphates. In Cereibacter sphaeroides (strain ATCC 17029 / ATH 2.4.9) (Rhodobacter sphaeroides), this protein is Formamidopyrimidine-DNA glycosylase.